A 248-amino-acid chain; its full sequence is DNA repair protein RecO (248 aa).

The protein belongs to the RecO family.

Functionally, involved in DNA repair and RecF pathway recombination. This is DNA repair protein RecO from Bartonella tribocorum (strain CIP 105476 / IBS 506).